A 408-amino-acid polypeptide reads, in one-letter code: NADH-quinone oxidoreductase subunit D (408 aa).

It belongs to the complex I 49 kDa subunit family. As to quaternary structure, NDH-1 is composed of 14 different subunits. Subunits NuoB, C, D, E, F, and G constitute the peripheral sector of the complex.

It is found in the cell inner membrane. It carries out the reaction a quinone + NADH + 5 H(+)(in) = a quinol + NAD(+) + 4 H(+)(out). Functionally, NDH-1 shuttles electrons from NADH, via FMN and iron-sulfur (Fe-S) centers, to quinones in the respiratory chain. The immediate electron acceptor for the enzyme in this species is believed to be ubiquinone. Couples the redox reaction to proton translocation (for every two electrons transferred, four hydrogen ions are translocated across the cytoplasmic membrane), and thus conserves the redox energy in a proton gradient. The protein is NADH-quinone oxidoreductase subunit D of Campylobacter jejuni subsp. jejuni serotype O:23/36 (strain 81-176).